The following is a 249-amino-acid chain: Pleckstrin homology domain-containing family F member 2 (249 aa).

Residues 35-131 (VLIGEGVLTK…WMNHINKCVS (97 aa)) form the PH domain. Residues 152–212 (DSEATVCMRC…ICDSCYDLLS (61 aa)) form an FYVE-type zinc finger. Zn(2+) is bound by residues cysteine 158, cysteine 161, cysteine 175, cysteine 178, cysteine 183, cysteine 186, cysteine 204, and cysteine 207. Polar residues predominate over residues 219–232 (CQSTRSDSYSQSPK). The interval 219 to 249 (CQSTRSDSYSQSPKSSLNDASDDDDDEDSSD) is disordered. Acidic residues predominate over residues 238 to 249 (ASDDDDDEDSSD).

It localises to the early endosome membrane. It is found in the endoplasmic reticulum. May play a role in early endosome fusion upstream of RAB5, hence regulating receptor trafficking and fluid-phase transport. Enhances cellular sensitivity to TNF-induced apoptosis. The polypeptide is Pleckstrin homology domain-containing family F member 2 (PLEKHF2) (Gallus gallus (Chicken)).